The primary structure comprises 258 residues: Snake venom serine protease 1 (258 aa).

Residues 1–18 (MVLIRVLANLLILQLSYA) form the signal peptide. A propeptide spanning residues 19–24 (QKSSEL) is cleaved from the precursor. The Peptidase S1 domain maps to 25-249 (VVGGDECNIN…YNDWIKSIIA (225 aa)). Intrachain disulfides connect C31–C163, C50–C66, C98–C256, C142–C210, C174–C189, and C200–C225. N44 carries an N-linked (GlcNAc...) asparagine glycan. Catalysis depends on charge relay system residues H65 and D110. Catalysis depends on S204, which acts as the Charge relay system.

The protein belongs to the peptidase S1 family. Snake venom subfamily. In terms of assembly, monomer. Expressed by the venom gland.

Its subcellular location is the secreted. Snake venom serine protease that may act in the hemostasis system of the prey. This chain is Snake venom serine protease 1 (TLG1), found in Craspedocephalus gramineus (Bamboo pit viper).